The sequence spans 772 residues: TBC domain-containing protein C4G8.04 (772 aa).

The span at 143–161 (SFFPSSQEPSIPENPSSLT) shows a compositional bias: polar residues. 2 disordered regions span residues 143 to 163 (SFFPSSQEPSIPENPSSLTGE) and 275 to 294 (KFFRSSPRCSTPSVSSTFVS). Residues 275-291 (KFFRSSPRCSTPSVSST) show a composition bias toward low complexity. Thr395 carries the post-translational modification Phosphothreonine. The 190-residue stretch at 504 to 693 (GVPLCYKAKV…RIFDMLFCDG (190 aa)) folds into the Rab-GAP TBC domain.

This Schizosaccharomyces pombe (strain 972 / ATCC 24843) (Fission yeast) protein is TBC domain-containing protein C4G8.04.